The primary structure comprises 771 residues: Assimilatory nitrate reductase electron transfer subunit (771 aa).

An FAD-binding site is contributed by 43-79 (YNRILLSSVLQGEASLDDITLNSKDWYDKHGITLYTG). Residues C414, C416, C449, and C452 each coordinate [2Fe-2S] cluster.

FAD is required as a cofactor. Requires [2Fe-2S] cluster as cofactor.

Functionally, required for nitrate assimilation. This chain is Assimilatory nitrate reductase electron transfer subunit (nasB), found in Bacillus subtilis (strain 168).